The sequence spans 1049 residues: Probable disease resistance protein RF9 (1049 aa).

A coiled-coil region spans residues 25–41 (QGVEDQVTELKRDLNLL). Residues 139-158 (GYKQPQGDKQREMRPRFSKD) form a disordered region. Positions 144 to 158 (QGDKQREMRPRFSKD) are enriched in basic and acidic residues. Residues 147–460 (KQREMRPRFS…AEGIFQPRHY (314 aa)) enclose the NB-ARC domain. 190–197 (GMGGLGKT) lines the ATP pocket. 10 LRR repeats span residues 584–608 (LELL…SIGQ), 609–634 (LIHL…NLKL), 657–682 (MQQL…NLVK), 683–707 (LETL…RLRT), 776–799 (PSHL…ILEK), 800–827 (LHQL…GFPQ), 849–873 (MPVL…HLPS), 896–923 (LVHL…GFPQ), 945–968 (MPQL…GFPQ), and 990–1015 (MPLL…RFIY).

This sequence belongs to the disease resistance NB-LRR family.

Its function is as follows. Potential disease resistance protein. In Arabidopsis thaliana (Mouse-ear cress), this protein is Probable disease resistance protein RF9 (RF9).